Here is a 761-residue protein sequence, read N- to C-terminus: Zinc finger protein 287 (761 aa).

An SCAN box domain is found at 49–131 (RQNFRNFPYP…TLVEDLTQIL (83 aa)). A disordered region spans residues 134-154 (EAPQNSTLSQDTPEEDPRGKH). The KRAB domain occupies 170 to 238 (MTFKDVAVDI…IKEILEGPSP (69 aa)). 14 consecutive C2H2-type zinc fingers follow at residues 368-390 (YKCN…QSTH), 396-418 (YECE…QRMH), 424-446 (YECH…QRIH), 452-474 (YKCD…QRTH), 480-502 (YKCL…QRVH), 508-530 (YICN…QKIH), 536-558 (YKCN…QRIH), 564-586 (YKCN…QTTH), 592-614 (YICN…HRTH), 620-642 (YKCS…QRIH), 648-670 (FKCN…QRIH), 676-698 (YKCN…QRTH), 704-726 (YKCN…QRIH), and 732-754 (YACR…QRVH).

It belongs to the krueppel C2H2-type zinc-finger protein family.

It localises to the nucleus. Functionally, may be involved in transcriptional regulation. This chain is Zinc finger protein 287, found in Homo sapiens (Human).